Reading from the N-terminus, the 181-residue chain is Lysozyme C (181 aa).

Residues 1–19 (MRIAFFLLILSIIVGLAYG) form the signal peptide. Positions 139 to 181 (LTDSRPLGPFNVTEEEMDQLFIDHEIAMAQCEAEKTCNGFDLE) are excised as a propeptide.

It belongs to the dictyostelium lysozyme family. In terms of processing, contains six disulfide bonds.

The protein localises to the cytoplasmic vesicle lumen. It carries out the reaction Hydrolysis of (1-&gt;4)-beta-linkages between N-acetylmuramic acid and N-acetyl-D-glucosamine residues in a peptidoglycan and between N-acetyl-D-glucosamine residues in chitodextrins.. In terms of biological role, has antibacterial activity. This is Lysozyme C (alyC) from Dictyostelium discoideum (Social amoeba).